Reading from the N-terminus, the 323-residue chain is Lipoyl synthase (323 aa).

Residues C61, C66, C72, C87, C91, C94, and S303 each contribute to the [4Fe-4S] cluster site. One can recognise a Radical SAM core domain in the interval W73–P292.

The protein belongs to the radical SAM superfamily. Lipoyl synthase family. It depends on [4Fe-4S] cluster as a cofactor.

Its subcellular location is the cytoplasm. It catalyses the reaction [[Fe-S] cluster scaffold protein carrying a second [4Fe-4S](2+) cluster] + N(6)-octanoyl-L-lysyl-[protein] + 2 oxidized [2Fe-2S]-[ferredoxin] + 2 S-adenosyl-L-methionine + 4 H(+) = [[Fe-S] cluster scaffold protein] + N(6)-[(R)-dihydrolipoyl]-L-lysyl-[protein] + 4 Fe(3+) + 2 hydrogen sulfide + 2 5'-deoxyadenosine + 2 L-methionine + 2 reduced [2Fe-2S]-[ferredoxin]. The protein operates within protein modification; protein lipoylation via endogenous pathway; protein N(6)-(lipoyl)lysine from octanoyl-[acyl-carrier-protein]: step 2/2. In terms of biological role, catalyzes the radical-mediated insertion of two sulfur atoms into the C-6 and C-8 positions of the octanoyl moiety bound to the lipoyl domains of lipoate-dependent enzymes, thereby converting the octanoylated domains into lipoylated derivatives. The polypeptide is Lipoyl synthase (Protochlamydia amoebophila (strain UWE25)).